A 364-amino-acid chain; its full sequence is Uroporphyrinogen decarboxylase (364 aa).

Substrate is bound by residues 28–32 (RQAGR), Asp-78, Tyr-160, Thr-215, and His-333.

It belongs to the uroporphyrinogen decarboxylase family. Homodimer.

Its subcellular location is the cytoplasm. The enzyme catalyses uroporphyrinogen III + 4 H(+) = coproporphyrinogen III + 4 CO2. It functions in the pathway porphyrin-containing compound metabolism; protoporphyrin-IX biosynthesis; coproporphyrinogen-III from 5-aminolevulinate: step 4/4. Its function is as follows. Catalyzes the decarboxylation of four acetate groups of uroporphyrinogen-III to yield coproporphyrinogen-III. In Burkholderia cenocepacia (strain ATCC BAA-245 / DSM 16553 / LMG 16656 / NCTC 13227 / J2315 / CF5610) (Burkholderia cepacia (strain J2315)), this protein is Uroporphyrinogen decarboxylase.